Here is a 321-residue protein sequence, read N- to C-terminus: Chitinase-like protein 1 (321 aa).

Residues 1-26 (MVTIRSGSIVILVLLAVSFLALVANG) form the signal peptide. A disulfide bridge links C42 with C55. Residue N57 is glycosylated (N-linked (GlcNAc...) asparagine). Residues C157 and C167 are joined by a disulfide bond. Residues N208 and N244 are each glycosylated (N-linked (GlcNAc...) asparagine). The cysteines at positions 267 and 304 are disulfide-linked. Positions 297–321 (GPNDELSCAEQKPFNPSTVPSSSSS) are disordered. The segment covering 310–321 (FNPSTVPSSSSS) has biased composition (polar residues).

This sequence belongs to the glycosyl hydrolase 19 family. Mostly expressed in seedlings shoots and roots, stems, and flowers, and, to a lower extent, in flowers, mature leaves and roots.

It localises to the secreted. In terms of biological role, no chitinase activity. Essential for normal plant growth and development. Regulates cell expansion extent and differentiation at least in roots and hypocotyls. Prevents lignin accumulation in the pith. May modulate ethylene-mediated regulation during development. Probably required to establish thermotolerance acclimation. Plays a role for controlled anisotropic cell expansion in the regulation of waving during root gravitropism and thigmotropism. Involved in the root system architecture adaptation to multiple environmental conditions such as nitrate. Contributes to salt tolerance and possibly to drought by preventing the overaccumulation of sodium ions. This Arabidopsis thaliana (Mouse-ear cress) protein is Chitinase-like protein 1 (CTL1).